The sequence spans 298 residues: Bifunctional protein FolD (298 aa).

NADP(+) contacts are provided by residues 167–169 (GRS), Ser192, and Ile233.

This sequence belongs to the tetrahydrofolate dehydrogenase/cyclohydrolase family. As to quaternary structure, homodimer.

It carries out the reaction (6R)-5,10-methylene-5,6,7,8-tetrahydrofolate + NADP(+) = (6R)-5,10-methenyltetrahydrofolate + NADPH. The enzyme catalyses (6R)-5,10-methenyltetrahydrofolate + H2O = (6R)-10-formyltetrahydrofolate + H(+). It participates in one-carbon metabolism; tetrahydrofolate interconversion. Functionally, catalyzes the oxidation of 5,10-methylenetetrahydrofolate to 5,10-methenyltetrahydrofolate and then the hydrolysis of 5,10-methenyltetrahydrofolate to 10-formyltetrahydrofolate. This is Bifunctional protein FolD from Caulobacter sp. (strain K31).